We begin with the raw amino-acid sequence, 368 residues long: Isocitrate dehydrogenase [NAD] subunit 2, mitochondrial (368 aa).

The N-terminal 14 residues, 1–14 (MFRQSIVKQSCRFL), are a transit peptide targeting the mitochondrion. 4 residues coordinate substrate: arginine 118, arginine 128, arginine 149, and aspartate 236. Residues aspartate 236, aspartate 262, and aspartate 266 each coordinate Mg(2+).

The protein belongs to the isocitrate and isopropylmalate dehydrogenases family. As to quaternary structure, octamer of two non-identical subunits IDH1 and IDH2. The cofactor is Mg(2+). Requires Mn(2+) as cofactor.

It localises to the mitochondrion. The enzyme catalyses D-threo-isocitrate + NAD(+) = 2-oxoglutarate + CO2 + NADH. In terms of biological role, performs an essential role in the oxidative function of the citric acid cycle. This chain is Isocitrate dehydrogenase [NAD] subunit 2, mitochondrial (IDH2), found in Kluyveromyces lactis (strain ATCC 8585 / CBS 2359 / DSM 70799 / NBRC 1267 / NRRL Y-1140 / WM37) (Yeast).